The sequence spans 554 residues: Phosphomethylpyrimidine synthase (554 aa).

Residues Asn-188, Met-217, Tyr-246, His-282, 302–304 (SRG), 343–346 (DGLR), and Glu-382 contribute to the substrate site. His-386 serves as a coordination point for Zn(2+). Residue Tyr-409 coordinates substrate. His-450 contacts Zn(2+). [4Fe-4S] cluster-binding residues include Cys-530, Cys-533, and Cys-538.

Belongs to the ThiC family. As to quaternary structure, homodimer. [4Fe-4S] cluster is required as a cofactor.

It catalyses the reaction 5-amino-1-(5-phospho-beta-D-ribosyl)imidazole + S-adenosyl-L-methionine = 4-amino-2-methyl-5-(phosphooxymethyl)pyrimidine + CO + 5'-deoxyadenosine + formate + L-methionine + 3 H(+). Its pathway is cofactor biosynthesis; thiamine diphosphate biosynthesis. Its function is as follows. Catalyzes the synthesis of the hydroxymethylpyrimidine phosphate (HMP-P) moiety of thiamine from aminoimidazole ribotide (AIR) in a radical S-adenosyl-L-methionine (SAM)-dependent reaction. The protein is Phosphomethylpyrimidine synthase of Coxiella burnetii (strain CbuK_Q154) (Coxiella burnetii (strain Q154)).